Consider the following 218-residue polypeptide: Glutathione S-transferase Mu 2 (218 aa).

One can recognise a GST N-terminal domain in the interval 2-88 (PIILGYWNIR…YIARKHNLCG (87 aa)). 7-8 (YW) is a binding site for glutathione. Phosphoserine occurs at positions 27 and 44. Glutathione is bound by residues 43–46 (RSQW), Lys50, 59–60 (NL), and 72–73 (QS). A GST C-terminal domain is found at 90–208 (TEKEKIQEDI…KSSRFLPRPV (119 aa)). Substrate is bound at residue Tyr116.

The protein belongs to the GST superfamily. Mu family. As to quaternary structure, homodimer.

It is found in the cytoplasm. It catalyses the reaction RX + glutathione = an S-substituted glutathione + a halide anion + H(+). The catalysed reaction is 11(S)-hydroxy-14(S),15(S)-epoxy-(5Z,8Z,12E)-eicosatrienoate + glutathione = (11S,15S)-dihydroxy-14(R)-S-glutathionyl-(5Z,8Z,12E)-eicosatrienoate. Its function is as follows. Conjugation of reduced glutathione to a wide number of exogenous and endogenous hydrophobic electrophiles. Participates in the formation of novel hepoxilin regioisomers. This is Glutathione S-transferase Mu 2 (GSTM2) from Pongo abelii (Sumatran orangutan).